Consider the following 180-residue polypeptide: MDDSEEDQRLPHHRDPKEFIPLDKLSELGIISWRLNPDNWENDENLKKIREARGYSYMDICDVCPEKLPNYEIKIKNFFEEHLHTDEEIRYCLEGSGYFDVRDENDQWIRVAVKKGGMIVLPAGMYHRFTLDNENYIKAMRLFVGEPVWTPYNRPHDHLPARKEYLDKLLKPEGQAVEAR.

4 residues coordinate Fe(2+): His82, His84, Glu88, and His127. Residues His82, His84, Glu88, and His127 each contribute to the Ni(2+) site.

Belongs to the acireductone dioxygenase (ARD) family. Fe(2+) serves as cofactor. It depends on Ni(2+) as a cofactor.

The protein localises to the cytoplasm. The protein resides in the nucleus. The catalysed reaction is 1,2-dihydroxy-5-(methylsulfanyl)pent-1-en-3-one + O2 = 4-methylsulfanyl-2-oxobutanoate + formate + 2 H(+). It catalyses the reaction 1,2-dihydroxy-5-(methylsulfanyl)pent-1-en-3-one + O2 = 3-(methylsulfanyl)propanoate + CO + formate + 2 H(+). The protein operates within amino-acid biosynthesis; L-methionine biosynthesis via salvage pathway; L-methionine from S-methyl-5-thio-alpha-D-ribose 1-phosphate: step 5/6. Functionally, catalyzes 2 different reactions between oxygen and the acireductone 1,2-dihydroxy-3-keto-5-methylthiopentene (DHK-MTPene) depending upon the metal bound in the active site. Fe-containing acireductone dioxygenase (Fe-ARD) produces formate and 2-keto-4-methylthiobutyrate (KMTB), the alpha-ketoacid precursor of methionine in the methionine recycle pathway. Ni-containing acireductone dioxygenase (Ni-ARD) produces methylthiopropionate, carbon monoxide and formate, and does not lie on the methionine recycle pathway. The protein is Acireductone dioxygenase 1 of Sorghum bicolor (Sorghum).